The following is a 464-amino-acid chain: UDP-N-acetylmuramate--L-alanine ligase (464 aa).

112–118 (GTHGKTT) contacts ATP.

This sequence belongs to the MurCDEF family.

Its subcellular location is the cytoplasm. The catalysed reaction is UDP-N-acetyl-alpha-D-muramate + L-alanine + ATP = UDP-N-acetyl-alpha-D-muramoyl-L-alanine + ADP + phosphate + H(+). It participates in cell wall biogenesis; peptidoglycan biosynthesis. In terms of biological role, cell wall formation. This Chromobacterium violaceum (strain ATCC 12472 / DSM 30191 / JCM 1249 / CCUG 213 / NBRC 12614 / NCIMB 9131 / NCTC 9757 / MK) protein is UDP-N-acetylmuramate--L-alanine ligase.